Reading from the N-terminus, the 240-residue chain is Ribosomal RNA small subunit methyltransferase G (240 aa).

Residues Gly77, Phe82, 128-129 (AE), and Arg148 contribute to the S-adenosyl-L-methionine site. Residues 217-240 (EKRSKTPKKYPRKAGTPNKSPLLK) are disordered.

The protein belongs to the methyltransferase superfamily. RNA methyltransferase RsmG family.

Its subcellular location is the cytoplasm. Its function is as follows. Specifically methylates the N7 position of guanine in position 535 of 16S rRNA. In Staphylococcus carnosus (strain TM300), this protein is Ribosomal RNA small subunit methyltransferase G.